The following is a 116-amino-acid chain: Large ribosomal subunit protein bL17 (116 aa).

This sequence belongs to the bacterial ribosomal protein bL17 family. As to quaternary structure, part of the 50S ribosomal subunit. Contacts protein L32.

This chain is Large ribosomal subunit protein bL17, found in Chloroflexus aurantiacus (strain ATCC 29366 / DSM 635 / J-10-fl).